The primary structure comprises 324 residues: UDP-galactose transporter homolog 1 (324 aa).

The next 2 helical transmembrane spans lie at 7–27 and 42–62; these read LVIA…AQEP and HSSF…LCYL. Asn97 is a glycosylation site (N-linked (GlcNAc...) asparagine). Transmembrane regions (helical) follow at residues 106-126, 135-155, 161-181, 199-219, 237-257, 265-285, and 290-310; these read VGYM…HVLV, KALV…GGAE, ASLY…LTNA, HLMV…LVLF, ILTY…FVFF, LVLA…SIVV, and VRPV…WETV.

Belongs to the nucleotide-sugar transporter family. SLC35B subfamily.

The protein resides in the endoplasmic reticulum membrane. Its function is as follows. May be involved in specific transport of UDP-Gal from the cytosol to the Golgi lumen. Involved in the maintenance of optimal conditions for the folding of secretory pathway proteins in the endoplasmic reticulum. The sequence is that of UDP-galactose transporter homolog 1 (HUT1) from Eremothecium gossypii (strain ATCC 10895 / CBS 109.51 / FGSC 9923 / NRRL Y-1056) (Yeast).